The chain runs to 253 residues: Amino-acid-binding protein AabA (253 aa).

The signal sequence occupies residues 1 to 23 (MPFLKTLFRGALCSIACGASLFC).

Belongs to the bacterial solute-binding protein 3 family.

Its subcellular location is the periplasm. This is Amino-acid-binding protein AabA (aabA) from Dichelobacter nodosus (Bacteroides nodosus).